Consider the following 546-residue polypeptide: Chaperonin GroEL (546 aa).

ATP is bound by residues 30–33, Lys-51, 87–91, Gly-415, and Asp-496; these read TLGP and DGTTT. The disordered stretch occupies residues 526-546; sequence PEPKSAPAGGMGGMGGMDGMM. Over residues 534–546 the composition is skewed to gly residues; sequence GGMGGMGGMDGMM.

It belongs to the chaperonin (HSP60) family. In terms of assembly, forms a cylinder of 14 subunits composed of two heptameric rings stacked back-to-back. Interacts with the co-chaperonin GroES.

The protein resides in the cytoplasm. It catalyses the reaction ATP + H2O + a folded polypeptide = ADP + phosphate + an unfolded polypeptide.. Together with its co-chaperonin GroES, plays an essential role in assisting protein folding. The GroEL-GroES system forms a nano-cage that allows encapsulation of the non-native substrate proteins and provides a physical environment optimized to promote and accelerate protein folding. The polypeptide is Chaperonin GroEL (Rhodopseudomonas palustris).